We begin with the raw amino-acid sequence, 95 residues long: RING finger protein Z (95 aa).

Positions 1–16 are enriched in low complexity; sequence MGNSKSKSNPSSSSES. Residues 1–23 are disordered; the sequence is MGNSKSKSNPSSSSESQKGAPTV. Glycine 2 carries the N-myristoyl glycine; by host lipid modification. An RING-type; atypical zinc finger spans residues 40–76; sequence CKCCWFADKNLIKCSDHYLCLRCLNVMLKNSDLCNIC. The PTAP/PSAP motif motif lies at 90 to 93; sequence PSAP.

The protein belongs to the arenaviridae Z protein family. As to quaternary structure, interacts with protein NP; this interaction probably directs the encapsidated genome to budding sites. Interacts (via RING domain) with polymerase L; this interaction inhibits viral transcription and replication, Z partially blocks the product exit tunnel for the releasing nascent RNA product. Interacts with the glycoprotein complex; this interaction plays a role in virion budding. Interacts with host eIF4E; this interaction results in eIF4E reduced affinity for its substrate, the 5'-m7 G cap structure. Interacts (via late-budding domain) with host TSG101; this interaction is essential for budding and release of viral particles. Interacts with host RPLP0; this interaction may serve to load ribosome-like particles inside the virion. Interacts with host PML; this interaction induces PML bodies redistribution in the cytoplasm upon viral infection. Myristoylation is required for the role of RING finger protein Z in assembly and budding.

It localises to the virion. It is found in the host cytoplasm. The protein resides in the host perinuclear region. The protein localises to the host cell membrane. Plays a crucial role in virion assembly and budding. Expressed late in the virus life cycle, it acts as an inhibitor of viral transcription and RNA synthesis by interacting with the viral polymerase L. Presumably recruits the NP encapsidated genome to cellular membranes at budding sites via direct interaction with NP. Plays critical roles in the final steps of viral release by interacting with host TSG101, a member of the vacuolar protein-sorting pathway and using other cellular host proteins involved in vesicle formation pathway. The budding of the virus progeny occurs after association of protein Z with the viral glycoprotein complex SSP-GP1-GP2 at the cell periphery, step that requires myristoylation of protein Z. Also selectively represses protein production by associating with host eIF4E. In cell-based minigenome assay, has an inhibitory effect on the ribonucleoprotein machinery (vRNP), which is responsible for the replication and transcription of the viral genome. The sequence is that of RING finger protein Z from Guanarito mammarenavirus (isolate Human/Venezuela/NH-95551/1990) (GTOV).